A 543-amino-acid chain; its full sequence is Chaperonin GroEL (543 aa).

ATP-binding positions include threonine 29 to proline 32, aspartate 86 to threonine 90, glycine 413, and aspartate 504.

The protein belongs to the chaperonin (HSP60) family. As to quaternary structure, forms a cylinder of 14 subunits composed of two heptameric rings stacked back-to-back. Interacts with the co-chaperonin GroES.

It localises to the cytoplasm. It carries out the reaction ATP + H2O + a folded polypeptide = ADP + phosphate + an unfolded polypeptide.. In terms of biological role, together with its co-chaperonin GroES, plays an essential role in assisting protein folding. The GroEL-GroES system forms a nano-cage that allows encapsulation of the non-native substrate proteins and provides a physical environment optimized to promote and accelerate protein folding. In Mycoplasma pneumoniae (strain ATCC 29342 / M129 / Subtype 1) (Mycoplasmoides pneumoniae), this protein is Chaperonin GroEL.